We begin with the raw amino-acid sequence, 58 residues long: UPF0337 protein OB2685 (58 aa).

Composition is skewed to basic and acidic residues over residues M1–D22 and D30–A46. The tract at residues M1–K58 is disordered.

Belongs to the UPF0337 (CsbD) family.

The sequence is that of UPF0337 protein OB2685 from Oceanobacillus iheyensis (strain DSM 14371 / CIP 107618 / JCM 11309 / KCTC 3954 / HTE831).